A 137-amino-acid polypeptide reads, in one-letter code: Basic phospholipase A2 beta-bungarotoxin A5 chain (137 aa).

The N-terminal stretch at 1–9 is a signal peptide; the sequence is AVCVSLLGA. Positions 10–17 are excised as a propeptide; it reads ANIPPQHL. Cystine bridges form between C44–C136, C46–C62, C61–C117, C68–C110, C78–C103, and C96–C108. Residues Y45, G47, and G49 each coordinate Ca(2+). Residue H65 is part of the active site. Ca(2+) is bound at residue D66. D111 is an active-site residue.

Belongs to the phospholipase A2 family. Group I subfamily. D49 sub-subfamily. As to quaternary structure, heterodimer; disulfide-linked. The A chains have phospholipase A2 activity and the B chains show homology with the basic protease inhibitors. Requires Ca(2+) as cofactor. As to expression, expressed by the venom gland.

It localises to the secreted. The catalysed reaction is a 1,2-diacyl-sn-glycero-3-phosphocholine + H2O = a 1-acyl-sn-glycero-3-phosphocholine + a fatty acid + H(+). Snake venom phospholipase A2 (PLA2) that inhibits neuromuscular transmission by blocking acetylcholine release from the nerve termini. PLA2 catalyzes the calcium-dependent hydrolysis of the 2-acyl groups in 3-sn-phosphoglycerides. This chain is Basic phospholipase A2 beta-bungarotoxin A5 chain, found in Bungarus multicinctus (Many-banded krait).